Reading from the N-terminus, the 150-residue chain is Transcriptional regulator MraZ (150 aa).

SpoVT-AbrB domains lie at 6 to 52 (EFFN…PYQE) and 80 to 126 (AVEC…NRTK).

The protein belongs to the MraZ family. In terms of assembly, forms oligomers.

Its subcellular location is the cytoplasm. It localises to the nucleoid. This chain is Transcriptional regulator MraZ, found in Syntrophotalea carbinolica (strain DSM 2380 / NBRC 103641 / GraBd1) (Pelobacter carbinolicus).